The sequence spans 157 residues: Phosphopantetheine adenylyltransferase (157 aa).

Residue Ser9 participates in substrate binding. ATP contacts are provided by residues 9-10 (SF) and His17. Residues Lys41, Thr73, and Arg87 each coordinate substrate. ATP is bound by residues 88 to 90 (GIR), Glu98, and 122 to 128 (YQDISSS).

Belongs to the bacterial CoaD family. Homohexamer. It depends on Mg(2+) as a cofactor.

It is found in the cytoplasm. It catalyses the reaction (R)-4'-phosphopantetheine + ATP + H(+) = 3'-dephospho-CoA + diphosphate. It functions in the pathway cofactor biosynthesis; coenzyme A biosynthesis; CoA from (R)-pantothenate: step 4/5. Its function is as follows. Reversibly transfers an adenylyl group from ATP to 4'-phosphopantetheine, yielding dephospho-CoA (dPCoA) and pyrophosphate. The polypeptide is Phosphopantetheine adenylyltransferase (Oenococcus oeni (strain ATCC BAA-331 / PSU-1)).